We begin with the raw amino-acid sequence, 393 residues long: Xyloside xylosyltransferase 1 (393 aa).

The Cytoplasmic portion of the chain corresponds to 1–23 (MGLLRGGLPCARAMARLGAVRSH). A helical; Signal-anchor for type II membrane protein transmembrane segment spans residues 24 to 44 (YCALLLAAALAVCAFYYLGSG). Residues 45–393 (RETFSSATKR…GNCNTPIPED (349 aa)) are Lumenal-facing. 104 to 106 (MFT) contacts UDP-alpha-D-xylose. Mn(2+) is bound at residue aspartate 226. UDP-alpha-D-xylose is bound at residue leucine 227. Position 228 (aspartate 228) interacts with Mn(2+). An interaction with target proteins region spans residues 263–266 (HTFW). UDP-alpha-D-xylose is bound by residues serine 290, leucine 328, and glutamine 331. The a glycoprotein site is built by glutamine 331 and tryptophan 360. Disulfide bonds link cysteine 350-cysteine 375 and cysteine 357-cysteine 386. Histidine 383 serves as a coordination point for Mn(2+). Asparagine 385 contacts a glycoprotein.

This sequence belongs to the glycosyltransferase 8 family. As to quaternary structure, homodimer. Dimer formation may be essential for the retention in endoplasmic reticulum. Mg(2+) is required as a cofactor. The cofactor is Mn(2+).

The protein localises to the endoplasmic reticulum membrane. It carries out the reaction 3-O-[alpha-D-xylosyl-(1-&gt;3)-beta-D-glucosyl]-L-seryl-[EGF-like domain protein] + UDP-alpha-D-xylose = 3-O-[alpha-D-xylosyl-(1-&gt;3)-alpha-D-xylosyl-(1-&gt;3)-beta-D-glucosyl]-L-seryl-[EGF-like domain protein] + UDP + H(+). In terms of biological role, alpha-1,3-xylosyltransferase, which elongates the O-linked xylose-glucose disaccharide attached to EGF-like repeats in the extracellular domain of target proteins by catalyzing the addition of the second xylose. Known targets include Notch proteins and coagulation factors, such as F9. This chain is Xyloside xylosyltransferase 1 (XXYLT1), found in Homo sapiens (Human).